The sequence spans 295 residues: Tyrosine recombinase XerC (295 aa).

The Core-binding (CB) domain maps to 1-85 (MQTYLQKYWN…ALRQFLAFLV (85 aa)). The region spanning 106-285 (HLPKNINAEQ…NFQHLAEVYD (180 aa)) is the Tyr recombinase domain. Catalysis depends on residues Arg145, Lys169, His237, Arg240, and His263. Tyr272 acts as the O-(3'-phospho-DNA)-tyrosine intermediate in catalysis.

The protein belongs to the 'phage' integrase family. XerC subfamily. In terms of assembly, forms a cyclic heterotetrameric complex composed of two molecules of XerC and two molecules of XerD.

The protein localises to the cytoplasm. In terms of biological role, site-specific tyrosine recombinase, which acts by catalyzing the cutting and rejoining of the recombining DNA molecules. The XerC-XerD complex is essential to convert dimers of the bacterial chromosome into monomers to permit their segregation at cell division. It also contributes to the segregational stability of plasmids. This is Tyrosine recombinase XerC from Mannheimia succiniciproducens (strain KCTC 0769BP / MBEL55E).